The chain runs to 506 residues: SPbeta prophage-derived uncharacterized protein YonE (506 aa).

Positions Y473 to I506 are disordered. Residues G486 to I506 show a composition bias toward polar residues.

This Bacillus subtilis (strain 168) protein is SPbeta prophage-derived uncharacterized protein YonE (yonE).